The following is a 365-amino-acid chain: Mitogen-activated protein kinase HOG1 (365 aa).

The region spanning 20–306 (YSDLQPVGMG…ATNALAHEYL (287 aa)) is the Protein kinase domain. Residues 26–34 (VGMGAFGLV) and Lys49 each bind ATP. Asp148 functions as the Proton acceptor in the catalytic mechanism. The TXY motif lies at 178 to 180 (TGY).

It belongs to the protein kinase superfamily. Ser/Thr protein kinase family. MAP kinase subfamily. HOG1 sub-subfamily. Mg(2+) serves as cofactor.

It localises to the cytoplasm. Its subcellular location is the nucleus. The catalysed reaction is L-seryl-[protein] + ATP = O-phospho-L-seryl-[protein] + ADP + H(+). It carries out the reaction L-threonyl-[protein] + ATP = O-phospho-L-threonyl-[protein] + ADP + H(+). Functionally, proline-directed serine/threonine-protein kinase involved in a signal transduction pathway that is activated by changes in the osmolarity of the extracellular environment. Controls osmotic regulation of transcription of target genes. Involved in environmental stress response, hyphal growth, conidiation and possibly secondary metabolism such as ustiloxin biosynthesis or the biosynthesis of other phytotoxic compounds that are inhibitory to rice shoot growth during seed germination. Plays a key role in responses to cell wall and membrane stresses but not oxidative stress. This is Mitogen-activated protein kinase HOG1 from Ustilaginoidea virens (Rice false smut fungus).